The primary structure comprises 328 residues: H-2 class I histocompatibility antigen, K-Q alpha chain (328 aa).

The alpha-1 stretch occupies residues 1–71 (PRFISVGYVD…LLRYYNQSAG (71 aa)). The Extracellular portion of the chain corresponds to 1–265 (PRFISVGYVD…EPPPSAVSNT (265 aa)). Residue asparagine 67 is glycosylated (N-linked (GlcNAc...) asparagine). An alpha-2 region spans residues 72–163 (GSHTIQRMYG…KNGNATLLRT (92 aa)). Cysteine 82 and cysteine 145 are oxidised to a cystine. Asparagine 157 carries an N-linked (GlcNAc...) asparagine glycan. Residues 164–255 (DSPKAHVTHH…GLPKPLTLRW (92 aa)) are alpha-3. The Ig-like C1-type domain maps to 166–252 (PKAHVTHHSR…YHQGLPKPLT (87 aa)). Cysteine 184 and cysteine 240 are oxidised to a cystine. Residues 256-265 (EPPPSAVSNT) are connecting peptide. The chain crosses the membrane as a helical span at residues 266 to 289 (VIIAVLVVLGAAIVTGAVVAFVMM). The Cytoplasmic segment spans residues 290–328 (RRRNTGGKGGDYALAPGSQTSDLSLPDCKVMVHDPHSLA). Phosphoserine is present on residues serine 310 and serine 313.

The protein belongs to the MHC class I family. In terms of assembly, heterodimer of an alpha chain and a beta chain (beta-2-microglobulin).

It is found in the membrane. Functionally, involved in the presentation of foreign antigens to the immune system. The sequence is that of H-2 class I histocompatibility antigen, K-Q alpha chain (H2-K1) from Mus musculus (Mouse).